Here is a 1694-residue protein sequence, read N- to C-terminus: MECLDFSKLWFSTAAGLQQRCYYDCVAWECLGDDDLQIFISGLNRLIESVAVSCTGDEDLDFVVDSCNEFVTGRDLKSFFAADLPVREVSSVGCISHFIPGSVSGLNVSDLLDNQLYGCSVFSSDFESKLRDIRDAALSDAASGVSQLVSCHFEKDVRHLLAENANSVKIPVPQKLSDDDMRILRDHFPRYELKFTQNVDGPHNMAAAHRLLETHDLLSNFPADAPILDIGGNWFSHFRYGRSNVHSCCPMLDLRDNERHTHRLTMTESLMSSLRHRYAGTIDLDPDAHLSRKVSDSMKEFYKRWAVHPKDLIRLYAGIRDGNSSLYCHHKFGVSWNDVLWESERNNCLTVPEPECPFKAKYAIMVHSGYDLPLKELIGGMVQHGVVELHGTMIADPAMLVATSGYIPALRCNWEKSKGQIWFSFRDDSTMGYRHDWEVYSKYLTSTVVSCGKHFYVMERDKYRHGVLFYSIIKCSGSLRKGDHTFFHNAWFHEMYDKYIMKVPLVKVKDLTGDEGSVECSWREVVMSRKLVDRVIEVCLRGVKPINFGNCDDAVHMDNLRIIQNHLLSHSQTLVLNGSTIIREEAIPFKDFSPVSVTIYFEILLTRYKESLSLAWFHAGLGPDFKLGSWVSSLKRVFYRILGFPANLLKYVLNALFRCRDKVSDMEFVKPAVEKLTVLENTYIGKSLMGDCPTLKEYDDSAFFNILENVGNELFNNSSTDSGKPETPEVTMTGNPNAVIAEAISYCRAEVDRIGKKCERILHAYQATGNCGGYLNDTDNVGVFDKMTSWVQKPKEFDHEFGWDGSSFIKLSWFGKIPDFVGRYLVVTDGTRVTTNLKFSRQYATIPATVTPTIKLVDGVTGCGKTTEIVRRYRPGILILSVCKANVDEIRRKLAAVDSKFIRTVDSYLLSPSVTGSCDELFIDEYGLSHPGILLLAIHISGIRKVTLFGDSEQIPFCNRLADFPLKYNSVEDVGLNFDREIRSTTYRCPQDITLSLQKMYKTKPIKTVSTVESSITIKPIKSEFEIPLPNAFDGPVLYICMTKHDESLLKLRWAKENISSEVRTVHAAQGLSYKNVVYFRLTRTDNDLYTKRKLPYHLVAISRHTDKIVYCTTKPEDSSDFSLSALKNTIKTSRDLTQEASGSESSYAVVFESNSEVTATKPEVCENVRKAAEMNFPVSSDALYQKEVPIYGAIPDPKGKASYNPGSVIRAIEELTPGNTSIDTDALDELVEVGPMSLQVGSIRWDVSKISPRLFTNNKFAVPHLPTGALLRRNTSSRQVGLAIEKRNANVMNSQKYFDLENLANKAVERFFDFFIDMEKFSKLPTGVLGSSAEQIQTYQNKTGNKVTDPVCVALSPIQKYKHMIKRDVKFNLTDGAQSEYTKAATITYHQPEITQVATAIFGQFKTRLLACRNKFLNIPLEHDNDLSGYLTKYHLGSENNTFTEIDFSKFDKSQGEIHQLIQDLILIKFGCDPEFVALWSTAHRSSSIFDQNVGIGFKTDFQRRTGDAFTFLGNSLVTAAMLAFVISDPDREKIRYMLVGGDDSLICSYGPIQVPLEPLGDIFNMSCKLVQPACPYFASRYLIRRGDEILCVPDPYKLLVKLGRKDVPDNQASLCEIRTGLADSAKYIFDDIVKQKLAILVQVRYNKAAPSLYDALCTVHWALSSNTNFSKFYTVTNTSNEVRRNRRGVKIT.

The region spanning 194–444 (KFTQNVDGPH…HDWEVYSKYL (251 aa)) is the Alphavirus-like MT domain. In terms of domain architecture, (+)RNA virus helicase ATP-binding spans 829-983 (DGTRVTTNLK…VGLNFDREIR (155 aa)). Residues 984 to 1145 (STTYRCPQDI…DLTQEASGSE (162 aa)) form the (+)RNA virus helicase C-terminal domain. Positions 1442–1558 (NTFTEIDFSK…CSYGPIQVPL (117 aa)) constitute a RdRp catalytic domain.

This sequence belongs to the ssRNA positive-strand viruses RNA-directed RNA polymerase family.

The catalysed reaction is ATP + H2O = ADP + phosphate + H(+). The enzyme catalyses RNA(n) + a ribonucleoside 5'-triphosphate = RNA(n+1) + diphosphate. In terms of biological role, RNA-dependent RNA polymerase replicates the viral genome. This chain is Methyltransferase/helicase/RNA-directed RNA polymerase, found in Rubus idaeus (Raspberry).